A 1034-amino-acid chain; its full sequence is Glycine dehydrogenase (decarboxylating) B, mitochondrial (1034 aa).

Residues 1-63 (MERARRLAIL…LNGFGSQVRT (63 aa)) constitute a mitochondrion transit peptide. Lys770 carries the post-translational modification N6-(pyridoxal phosphate)lysine.

It belongs to the GcvP family. In terms of assembly, homodimer. The glycine cleavage system is composed of four proteins: P, T, L and H. Requires pyridoxal 5'-phosphate as cofactor.

Its subcellular location is the mitochondrion. It carries out the reaction N(6)-[(R)-lipoyl]-L-lysyl-[glycine-cleavage complex H protein] + glycine + H(+) = N(6)-[(R)-S(8)-aminomethyldihydrolipoyl]-L-lysyl-[glycine-cleavage complex H protein] + CO2. In terms of biological role, the glycine cleavage system catalyzes the degradation of glycine. The P protein binds the alpha-amino group of glycine through its pyridoxal phosphate cofactor; CO(2) is released and the remaining methylamine moiety is then transferred to the lipoamide cofactor of the H protein. This Flaveria pringlei protein is Glycine dehydrogenase (decarboxylating) B, mitochondrial (GDCSPB).